A 184-amino-acid polypeptide reads, in one-letter code: ATP synthase subunit delta (184 aa).

It belongs to the ATPase delta chain family. As to quaternary structure, F-type ATPases have 2 components, F(1) - the catalytic core - and F(0) - the membrane proton channel. F(1) has five subunits: alpha(3), beta(3), gamma(1), delta(1), epsilon(1). F(0) has three main subunits: a(1), b(2) and c(10-14). The alpha and beta chains form an alternating ring which encloses part of the gamma chain. F(1) is attached to F(0) by a central stalk formed by the gamma and epsilon chains, while a peripheral stalk is formed by the delta and b chains.

It localises to the cell inner membrane. Its function is as follows. F(1)F(0) ATP synthase produces ATP from ADP in the presence of a proton or sodium gradient. F-type ATPases consist of two structural domains, F(1) containing the extramembraneous catalytic core and F(0) containing the membrane proton channel, linked together by a central stalk and a peripheral stalk. During catalysis, ATP synthesis in the catalytic domain of F(1) is coupled via a rotary mechanism of the central stalk subunits to proton translocation. In terms of biological role, this protein is part of the stalk that links CF(0) to CF(1). It either transmits conformational changes from CF(0) to CF(1) or is implicated in proton conduction. In Rickettsia rickettsii (strain Iowa), this protein is ATP synthase subunit delta.